The primary structure comprises 579 residues: Nuclear receptor subfamily 1 group D member 2 (579 aa).

The tract at residues 1–60 (MEVNAGGVIAYISSSSSASSPASCHSEGSENSFQSSSSSVPSSPNSSNSDTNGNPKNGDL) is required for phosphorylation by CSNK1E and cytoplasmic localization. The interval 1-99 (MEVNAGGVIA…HSGVTKFSGM (99 aa)) is modulating. Over residues 13–54 (SSSSSASSPASCHSEGSENSFQSSSSSVPSSPNSSNSDTNGN) the composition is skewed to low complexity. A disordered region spans residues 13-61 (SSSSSASSPASCHSEGSENSFQSSSSSVPSSPNSSNSDTNGNPKNGDLA). Ser46 is modified (phosphoserine; by GSK3-beta). Residues 100–176 (VLLCKVCGDV…VGMSRDAVRF (77 aa)) constitute a DNA-binding region (nuclear receptor). 2 consecutive NR C4-type zinc fingers follow at residues 103–123 (CKVC…CEGC) and 140–164 (CLKN…FKKC). N6-acetyllysine; by KAT5 occurs at positions 162 and 163. The tract at residues 222–250 (PAQEQLRPKPQLEQENIKSSSPPSSDFAK) is disordered. A compositionally biased stretch (basic and acidic residues) spans 227–237 (LRPKPQLEQEN). 2 cysteine pairs are disulfide-bonded: Cys337-Cys343 and Cys374-Cys384. In terms of domain architecture, NR LBD spans 369 to 579 (KNSYLCNTGG…EELLAFKVHP (211 aa)). Residues Cys384 and His568 each coordinate heme. The tract at residues 397 to 579 (SGHEIWEEFS…EELLAFKVHP (183 aa)) is interaction with ZNHIT1.

It belongs to the nuclear hormone receptor family. NR1 subfamily. Binds DNA as a monomer or a homodimer. Interacts with NCOA5 coactivator, leading to a strong increase of transcription of target genes. Interacts (via N-terminus) with KAT5. Interacts (via C-terminus) with HDAC1. Interacts with ZNHIT1. Interacts with SIAH2. Deacetylated by HDAC1. Acetylation and deacetylation regulate its transcriptional regulatory activity. Post-translationally, under more reducing intracellular redox conditions, Cys-384 is in its heme-bound state, which is optimal for recruitment of the NCOR1/HDAC3 corepressor complex and repression of target genes. When subjected to oxidative stress conditions, Cys-384 undergoes oxidation to form a disulfide bridge with Cys-374, also triggering a ligand switch that results in release of bound heme and derepression of target genes. In terms of processing, ubiquitinated by SIAH2; leading to proteasomal degradation. Phosphorylated by CSNK1E; phosphorylation enhances its cytoplasmic localization. As to expression, widely expressed. Expressed at high levels in the liver, adipose tissue, skeletal muscle and brain. Expression oscillates diurnally in the suprachiasmatic nucleus (SCN) of the hypothalamus as well as in peripheral tissues.

The protein localises to the nucleus. The protein resides in the cytoplasm. The heme-bound form can bind gaseous signaling molecules such as CO and nitric oxide (NO) and NO can reverse its transcriptional repressor activity. Its function is as follows. Transcriptional repressor which coordinates circadian rhythm and metabolic pathways in a heme-dependent manner. Integral component of the complex transcription machinery that governs circadian rhythmicity and forms a critical negative limb of the circadian clock by directly repressing the expression of core clock components BMAL1 and CLOCK. Also regulates genes involved in metabolic functions, including lipid metabolism and the inflammatory response. Acts as a receptor for heme which stimulates its interaction with the NCOR1/HDAC3 corepressor complex, enhancing transcriptional repression. Recognizes two classes of DNA response elements within the promoter of its target genes and can bind to DNA as either monomers or homodimers, depending on the nature of the response element. Binds as a monomer to a response element composed of the consensus half-site motif 5'-[A/G]GGTCA-3' preceded by an A/T-rich 5' sequence (RevRE), or as a homodimer to a direct repeat of the core motif spaced by two nuclegotides (RevDR-2). Acts as a potent competitive repressor of ROR alpha (RORA) function and also negatively regulates the expression of NR1D1. Regulates lipid and energy homeostasis in the skeletal muscle via repression of genes involved in lipid metabolism and myogenesis including: CD36, FABP3, FABP4, UCP3, SCD1 and MSTN. Regulates hepatic lipid metabolism via the repression of APOC3. Represses gene expression at a distance in macrophages by inhibiting the transcription of enhancer-derived RNAs (eRNAs). In addition to its activity as a repressor, can also act as a transcriptional activator. Acts as a transcriptional activator of the sterol regulatory element-binding protein 1 (SREBF1) and the inflammatory mediator interleukin-6 (IL6) in the skeletal muscle. Plays a role in the regulation of circadian sleep/wake cycle; essential for maintaining wakefulness during the dark phase or active period. Key regulator of skeletal muscle mitochondrial function; negatively regulates the skeletal muscle expression of core clock genes and genes involved in mitochondrial biogenesis, fatty acid beta-oxidation and lipid metabolism. May play a role in the circadian control of neutrophilic inflammation in the lung. The polypeptide is Nuclear receptor subfamily 1 group D member 2 (Homo sapiens (Human)).